The sequence spans 138 residues: Putative pre-16S rRNA nuclease (138 aa).

It belongs to the YqgF nuclease family.

It localises to the cytoplasm. Its function is as follows. Could be a nuclease involved in processing of the 5'-end of pre-16S rRNA. The sequence is that of Putative pre-16S rRNA nuclease from Geobacillus thermodenitrificans (strain NG80-2).